We begin with the raw amino-acid sequence, 591 residues long: NADH-quinone oxidoreductase subunit C/D (591 aa).

Positions 1 to 182 are NADH dehydrogenase I subunit C; it reads MVTVVENTDP…TPYFLNTAKQ (182 aa). The tract at residues 206 to 591 is NADH dehydrogenase I subunit D; that stretch reads DFMFLNIGPN…IDIVMADCDR (386 aa).

The protein in the N-terminal section; belongs to the complex I 30 kDa subunit family. It in the C-terminal section; belongs to the complex I 49 kDa subunit family. In terms of assembly, NDH-1 is composed of 13 different subunits. Subunits NuoB, CD, E, F, and G constitute the peripheral sector of the complex.

The protein localises to the cell inner membrane. The enzyme catalyses a quinone + NADH + 5 H(+)(in) = a quinol + NAD(+) + 4 H(+)(out). Its function is as follows. NDH-1 shuttles electrons from NADH, via FMN and iron-sulfur (Fe-S) centers, to quinones in the respiratory chain. The immediate electron acceptor for the enzyme in this species is believed to be ubiquinone. Couples the redox reaction to proton translocation (for every two electrons transferred, four hydrogen ions are translocated across the cytoplasmic membrane), and thus conserves the redox energy in a proton gradient. This is NADH-quinone oxidoreductase subunit C/D from Psychrobacter cryohalolentis (strain ATCC BAA-1226 / DSM 17306 / VKM B-2378 / K5).